The following is a 179-amino-acid chain: Adenine phosphoribosyltransferase (179 aa).

It belongs to the purine/pyrimidine phosphoribosyltransferase family. Homodimer.

It is found in the cytoplasm. The catalysed reaction is AMP + diphosphate = 5-phospho-alpha-D-ribose 1-diphosphate + adenine. The protein operates within purine metabolism; AMP biosynthesis via salvage pathway; AMP from adenine: step 1/1. Its function is as follows. Catalyzes a salvage reaction resulting in the formation of AMP, that is energically less costly than de novo synthesis. This Helicobacter pylori (strain J99 / ATCC 700824) (Campylobacter pylori J99) protein is Adenine phosphoribosyltransferase.